The primary structure comprises 407 residues: Phosphopentomutase (407 aa).

6 residues coordinate Mn(2+): aspartate 10, aspartate 306, histidine 311, aspartate 347, histidine 348, and histidine 359.

It belongs to the phosphopentomutase family. The cofactor is Mn(2+).

It localises to the cytoplasm. The catalysed reaction is 2-deoxy-alpha-D-ribose 1-phosphate = 2-deoxy-D-ribose 5-phosphate. It catalyses the reaction alpha-D-ribose 1-phosphate = D-ribose 5-phosphate. It functions in the pathway carbohydrate degradation; 2-deoxy-D-ribose 1-phosphate degradation; D-glyceraldehyde 3-phosphate and acetaldehyde from 2-deoxy-alpha-D-ribose 1-phosphate: step 1/2. Isomerase that catalyzes the conversion of deoxy-ribose 1-phosphate (dRib-1-P) and ribose 1-phosphate (Rib-1-P) to deoxy-ribose 5-phosphate (dRib-5-P) and ribose 5-phosphate (Rib-5-P), respectively. The chain is Phosphopentomutase from Yersinia pestis bv. Antiqua (strain Antiqua).